We begin with the raw amino-acid sequence, 1657 residues long: Alsin (1657 aa).

3 RCC1 repeats span residues Asp59–Asp108, Asn109–Ile167, and Arg169–Gln218. The segment at Thr432–Arg480 is disordered. A compositionally biased stretch (basic and acidic residues) spans Gly445–Lys455. The segment covering Gln456 to Leu467 has biased composition (polar residues). Phosphoserine occurs at positions 465, 466, 483, and 492. Thr510 is subject to Phosphothreonine. RCC1 repeat units lie at residues Arg525–Ala576 and Ser578–Asp627. Lys533 bears the N6-acetyllysine mark. Residues Gly690–Lys885 form the DH domain. The 107-residue stretch at Gly901 to Ala1007 folds into the PH domain. MORN repeat units lie at residues Tyr1049 to Met1071, Tyr1072 to Met1094, Tyr1100 to Val1122, Phe1123 to Ser1145, Phe1151 to Glu1173, Tyr1175 to Tyr1197, Tyr1198 to Ile1220, and Tyr1221 to Tyr1244. Ser1335 is modified (phosphoserine). Residues Lys1513–Asn1657 form the VPS9 domain.

Forms a heteromeric complex with ALS2CL. Interacts with ALS2CL.

Its function is as follows. May act as a GTPase regulator. Controls survival and growth of spinal motoneurons. The protein is Alsin (ALS2) of Homo sapiens (Human).